A 132-amino-acid chain; its full sequence is Small ribosomal subunit protein uS8 (132 aa).

Belongs to the universal ribosomal protein uS8 family. As to quaternary structure, part of the 30S ribosomal subunit. Contacts proteins S5 and S12.

One of the primary rRNA binding proteins, it binds directly to 16S rRNA central domain where it helps coordinate assembly of the platform of the 30S subunit. The polypeptide is Small ribosomal subunit protein uS8 (Brevibacillus brevis (strain 47 / JCM 6285 / NBRC 100599)).